The chain runs to 487 residues: MAAAAPASAGTKGVVRQVIGPVLDVEFPAGKLPKILNALRIEGTNTAGQPVALTAEVQQLLGDHRVRAVAMSGTDGLVRGMEALDTGAPISVPVGEATLGRIFNVLGEPVDEQGPVNASATAPIHRSAPKLTELETKPKVFETGIKVIDLLAPYRQGGKVGLFGGAGVGKTVLIQELINNIAKEHGGVSVFGGVGERTREGNDLYEEFKDSGVINAEDLSKSKVALCYGQMNEPPGARMRVGLSALTMAEHFRDVNKQDVLLFVDNIFRFVQAGSEVSALLGRMPSAVGYQPTLGTDVGELQERITSTLEGSITSIQAVYVPADDLTDPAPATTFAHLDATTVLSRGLASKGIYPAVDPLDSTSTMLQPAVVGEEHYKTARAVQSTLQRYKELQDIIAILGLDELSEDDRRTVDRARKIEKFLSQPFFVAEIFTGMPGVYVKLEETIAGFNQILAGELDHLPEQAFYLVGNIDQVKAKAEKIAAEAK.

Position 164–171 (164–171 (GGAGVGKT)) interacts with ATP.

The protein belongs to the ATPase alpha/beta chains family. F-type ATPases have 2 components, CF(1) - the catalytic core - and CF(0) - the membrane proton channel. CF(1) has five subunits: alpha(3), beta(3), gamma(1), delta(1), epsilon(1). CF(0) has four main subunits: a(1), b(1), b'(1) and c(9-12).

It is found in the cellular thylakoid membrane. It carries out the reaction ATP + H2O + 4 H(+)(in) = ADP + phosphate + 5 H(+)(out). Functionally, produces ATP from ADP in the presence of a proton gradient across the membrane. The catalytic sites are hosted primarily by the beta subunits. This is ATP synthase subunit beta from Synechococcus sp. (strain WH7803).